The sequence spans 254 residues: 3-deoxy-manno-octulosonate cytidylyltransferase (254 aa).

Belongs to the KdsB family.

The protein localises to the cytoplasm. The enzyme catalyses 3-deoxy-alpha-D-manno-oct-2-ulosonate + CTP = CMP-3-deoxy-beta-D-manno-octulosonate + diphosphate. Its pathway is nucleotide-sugar biosynthesis; CMP-3-deoxy-D-manno-octulosonate biosynthesis; CMP-3-deoxy-D-manno-octulosonate from 3-deoxy-D-manno-octulosonate and CTP: step 1/1. The protein operates within bacterial outer membrane biogenesis; lipopolysaccharide biosynthesis. Functionally, activates KDO (a required 8-carbon sugar) for incorporation into bacterial lipopolysaccharide in Gram-negative bacteria. This is 3-deoxy-manno-octulosonate cytidylyltransferase from Tolumonas auensis (strain DSM 9187 / NBRC 110442 / TA 4).